A 306-amino-acid polypeptide reads, in one-letter code: IN2-2 protein (306 aa).

Tyr64 (proton donor) is an active-site residue. His131 contacts substrate. NADP(+) is bound at residue 210-220 (SPLGRGFFSSG). A disordered region spans residues 272 to 306 (LGSPPRKRRLPHTWHNKNRQLQPERGGTVCEAYTG). A compositionally biased stretch (basic residues) spans 276–289 (PRKRRLPHTWHNKN).

This sequence belongs to the aldo/keto reductase family. Aldo/keto reductase 2 subfamily. As to expression, leaves and roots.

The polypeptide is IN2-2 protein (IN2-2) (Zea mays (Maize)).